The following is a 504-amino-acid chain: Hexokinase-10 (504 aa).

A helical transmembrane segment spans residues 7 to 29 (GWVRVAAVGWAVAACAVAAGMVA). The Hexokinase domain occupies 39–493 (NRAVAVVRDL…SGTGAALLAA (455 aa)). Positions 94–226 (DGSEEGISYA…GLNMKVNVLV (133 aa)) are hexokinase small subdomain. ADP-binding residues include Gly108 and Thr109. Thr192, Lys193, Asn227, Asn254, Glu282, and Glu313 together coordinate D-glucose. The tract at residues 227-482 (NNTVGTLALG…ATVSLRVMEE (256 aa)) is hexokinase large subdomain. Residue Gly447 participates in ADP binding.

This sequence belongs to the hexokinase family. Expressed specifically in stamen.

The protein resides in the plastid. It localises to the chloroplast outer membrane. It catalyses the reaction a D-hexose + ATP = a D-hexose 6-phosphate + ADP + H(+). The enzyme catalyses D-fructose + ATP = D-fructose 6-phosphate + ADP + H(+). The catalysed reaction is D-glucose + ATP = D-glucose 6-phosphate + ADP + H(+). The protein operates within carbohydrate metabolism; hexose metabolism. Its pathway is carbohydrate degradation; glycolysis; D-glyceraldehyde 3-phosphate and glycerone phosphate from D-glucose: step 1/4. In terms of biological role, fructose and glucose phosphorylating enzyme. The chain is Hexokinase-10 (HXK10) from Oryza sativa subsp. japonica (Rice).